The primary structure comprises 208 residues: Probable GTP-binding protein EngB (208 aa).

An EngB-type G domain is found at 23-205 (LTSEMVILGR…RQTLLKYLLT (183 aa)). GTP contacts are provided by residues 31-38 (GRSNVGKS), 57-61 (GKTRL), 84-87 (DLPG), 154-157 (TKFD), and 182-184 (FNA). Mg(2+) contacts are provided by S38 and T59.

It belongs to the TRAFAC class TrmE-Era-EngA-EngB-Septin-like GTPase superfamily. EngB GTPase family. It depends on Mg(2+) as a cofactor.

Necessary for normal cell division and for the maintenance of normal septation. The protein is Probable GTP-binding protein EngB of Helicobacter pylori (strain HPAG1).